Consider the following 94-residue polypeptide: Small ribosomal subunit protein uS19 (94 aa).

It belongs to the universal ribosomal protein uS19 family.

Protein S19 forms a complex with S13 that binds strongly to the 16S ribosomal RNA. The polypeptide is Small ribosomal subunit protein uS19 (rpsS) (Lactobacillus acidophilus (strain ATCC 700396 / NCK56 / N2 / NCFM)).